A 33-amino-acid chain; its full sequence is Photosystem II reaction center protein Psb30 (33 aa).

A helical transmembrane segment spans residues 5–25 (VILQLGSILLVVAAGPLVIVL).

Belongs to the Psb30/Ycf12 family. PSII is composed of 1 copy each of membrane proteins PsbA, PsbB, PsbC, PsbD, PsbE, PsbF, PsbH, PsbI, PsbJ, PsbK, PsbL, PsbM, PsbT, PsbX, PsbY, PsbZ, Psb30/Ycf12, peripheral proteins of the oxygen-evolving complex and a large number of cofactors. It forms dimeric complexes.

The protein localises to the plastid. It localises to the chloroplast thylakoid membrane. In terms of biological role, a core subunit of photosystem II (PSII), probably helps stabilize the reaction center. This chain is Photosystem II reaction center protein Psb30, found in Oltmannsiellopsis viridis (Marine flagellate).